We begin with the raw amino-acid sequence, 506 residues long: Lysine--tRNA ligase (506 aa).

Mg(2+) is bound by residues Glu-416 and Glu-423.

The protein belongs to the class-II aminoacyl-tRNA synthetase family. Homodimer. Mg(2+) is required as a cofactor.

It is found in the cytoplasm. It catalyses the reaction tRNA(Lys) + L-lysine + ATP = L-lysyl-tRNA(Lys) + AMP + diphosphate. The protein is Lysine--tRNA ligase (lysS) of Xylella fastidiosa (strain 9a5c).